The following is a 104-amino-acid chain: MNNTEFHELVDEKLQLIEDMIDDSGADIEPVITGNVLTLEFENRSQIVINKQEPMHEIWLASKSGGFHFSYVDEKWTCSKTGMEFIEMVKEECQKHADEEIEWA.

Belongs to the frataxin family.

In terms of biological role, involved in iron-sulfur (Fe-S) cluster assembly. May act as a regulator of Fe-S biogenesis. The protein is Iron-sulfur cluster assembly protein CyaY of Aliivibrio fischeri (strain ATCC 700601 / ES114) (Vibrio fischeri).